Reading from the N-terminus, the 496-residue chain is Probable cytosol aminopeptidase (496 aa).

The Mn(2+) site is built by Lys262 and Asp267. Residue Lys274 is part of the active site. The Mn(2+) site is built by Asp285, Asp344, and Glu346. The active site involves Arg348.

This sequence belongs to the peptidase M17 family. Mn(2+) serves as cofactor.

The protein localises to the cytoplasm. The catalysed reaction is Release of an N-terminal amino acid, Xaa-|-Yaa-, in which Xaa is preferably Leu, but may be other amino acids including Pro although not Arg or Lys, and Yaa may be Pro. Amino acid amides and methyl esters are also readily hydrolyzed, but rates on arylamides are exceedingly low.. It carries out the reaction Release of an N-terminal amino acid, preferentially leucine, but not glutamic or aspartic acids.. Its function is as follows. Presumably involved in the processing and regular turnover of intracellular proteins. Catalyzes the removal of unsubstituted N-terminal amino acids from various peptides. This chain is Probable cytosol aminopeptidase, found in Rhizobium etli (strain CIAT 652).